The sequence spans 101 residues: Protein Tat (101 aa).

The tract at residues 1 to 20 (MEPVDPSLEPWKHPGSQPKT) is disordered. Positions 1–24 (MEPVDPSLEPWKHPGSQPKTACTN) are interaction with human CREBBP. Positions 1–48 (MEPVDPSLEPWKHPGSQPKTACTNCYCKKCCLHCQVCFTTKGLGISYG) are transactivation. 3 residues coordinate Zn(2+): Cys22, Cys25, and Cys27. The interval 22–37 (CTNCYCKKCCLHCQVC) is cysteine-rich. Lys28 carries the post-translational modification N6-acetyllysine; by host PCAF. 4 residues coordinate Zn(2+): Cys30, His33, Cys34, and Cys37. The core stretch occupies residues 38 to 48 (FTTKGLGISYG). A disordered region spans residues 45-101 (ISYGRKKRRQRRRPPQDSQTHQVSLPKQPSSQQRGDPTGPKESKKKVERETETDPDN). The segment covering 48–57 (GRKKRRQRRR) has biased composition (basic residues). The Nuclear localization signal, RNA-binding (TAR), and protein transduction motif lies at 49-57 (RKKRRQRRR). An interaction with the host capping enzyme RNGTT region spans residues 49–86 (RKKRRQRRRPPQDSQTHQVSLPKQPSSQQRGDPTGPKE). An N6-acetyllysine; by host EP300 and GCN5L2 mark is found at Lys50 and Lys51. Arg52 and Arg53 each carry asymmetric dimethylarginine; by host PRMT6. The segment covering 61–79 (DSQTHQVSLPKQPSSQQRG) has biased composition (polar residues). Residue Lys71 forms a Glycyl lysine isopeptide (Lys-Gly) (interchain with G-Cter in ubiquitin) linkage. A Cell attachment site motif is present at residues 78 to 80 (RGD). Over residues 83-101 (GPKESKKKVERETETDPDN) the composition is skewed to basic and acidic residues.

It belongs to the lentiviruses Tat family. Interacts with host CCNT1. Associates with the P-TEFb complex composed at least of Tat, P-TEFb (CDK9 and CCNT1), TAR RNA, RNA Pol II. Recruits the HATs CREBBP, TAF1/TFIID, EP300, PCAF and GCN5L2. Interacts with host KAT5/Tip60; this interaction targets the latter to degradation. Interacts with the host deacetylase SIRT1. Interacts with host capping enzyme RNGTT; this interaction stimulates RNGTT. Binds to host KDR, and to the host integrins ITGAV/ITGB3 and ITGA5/ITGB1. Interacts with host KPNB1/importin beta-1 without previous binding to KPNA1/importin alpha-1. Interacts with EIF2AK2. Interacts with host nucleosome assembly protein NAP1L1; this interaction may be required for the transport of Tat within the nucleus, since the two proteins interact at the nuclear rim. Interacts with host C1QBP/SF2P32; this interaction involves lysine-acetylated Tat. Interacts with the host chemokine receptors CCR2, CCR3 and CXCR4. Interacts with host DPP4/CD26; this interaction may trigger an anti-proliferative effect. Interacts with host LDLR. Interacts with the host extracellular matrix metalloproteinase MMP1. Interacts with host PRMT6; this interaction mediates Tat's methylation. Interacts with, and is ubiquitinated by MDM2/Hdm2. Interacts with host PSMC3 and HTATIP2. Interacts with STAB1; this interaction may overcome SATB1-mediated repression of IL2 and IL2RA (interleukin) in T cells by binding to the same domain than HDAC1. Interacts (when acetylated) with human CDK13, thereby increasing HIV-1 mRNA splicing and promoting the production of the doubly spliced HIV-1 protein Nef. Interacts with host TBP; this interaction modulates the activity of transcriptional pre-initiation complex. Interacts with host RELA. Interacts with host PLSCR1; this interaction negatively regulates Tat transactivation activity by altering its subcellular distribution. Post-translationally, asymmetrical arginine methylation by host PRMT6 seems to diminish the transactivation capacity of Tat and affects the interaction with host CCNT1. Acetylation by EP300, CREBBP, GCN5L2/GCN5 and PCAF regulates the transactivation activity of Tat. EP300-mediated acetylation of Lys-50 promotes dissociation of Tat from the TAR RNA through the competitive binding to PCAF's bromodomain. In addition, the non-acetylated Tat's N-terminus can also interact with PCAF. PCAF-mediated acetylation of Lys-28 enhances Tat's binding to CCNT1. Lys-50 is deacetylated by SIRT1. In terms of processing, polyubiquitination by host MDM2 does not target Tat to degradation, but activates its transactivation function and fosters interaction with CCNT1 and TAR RNA. Post-translationally, phosphorylated by EIF2AK2 on serine and threonine residues adjacent to the basic region important for TAR RNA binding and function. Phosphorylation of Tat by EIF2AK2 is dependent on the prior activation of EIF2AK2 by dsRNA.

It is found in the host nucleus. It localises to the host nucleolus. Its subcellular location is the host cytoplasm. The protein localises to the secreted. Its function is as follows. Transcriptional activator that increases RNA Pol II processivity, thereby increasing the level of full-length viral transcripts. Recognizes a hairpin structure at the 5'-LTR of the nascent viral mRNAs referred to as the transactivation responsive RNA element (TAR) and recruits the cyclin T1-CDK9 complex (P-TEFb complex) that will in turn hyperphosphorylate the RNA polymerase II to allow efficient elongation. The CDK9 component of P-TEFb and other Tat-activated kinases hyperphosphorylate the C-terminus of RNA Pol II that becomes stabilized and much more processive. Other factors such as HTATSF1/Tat-SF1, SUPT5H/SPT5, and HTATIP2 are also important for Tat's function. Besides its effect on RNA Pol II processivity, Tat induces chromatin remodeling of proviral genes by recruiting the histone acetyltransferases (HATs) CREBBP, EP300 and PCAF to the chromatin. This also contributes to the increase in proviral transcription rate, especially when the provirus integrates in transcriptionally silent region of the host genome. To ensure maximal activation of the LTR, Tat mediates nuclear translocation of NF-kappa-B by interacting with host RELA. Through its interaction with host TBP, Tat may also modulate transcription initiation. Tat can reactivate a latently infected cell by penetrating in it and transactivating its LTR promoter. In the cytoplasm, Tat is thought to act as a translational activator of HIV-1 mRNAs. Extracellular circulating Tat can be endocytosed by surrounding uninfected cells via the binding to several surface receptors such as CD26, CXCR4, heparan sulfate proteoglycans (HSPG) or LDLR. Neurons are rarely infected, but they internalize Tat via their LDLR. Through its interaction with nuclear HATs, Tat is potentially able to control the acetylation-dependent cellular gene expression. Modulates the expression of many cellular genes involved in cell survival, proliferation or in coding for cytokines or cytokine receptors. Tat plays a role in T-cell and neurons apoptosis. Tat induced neurotoxicity and apoptosis probably contribute to neuroAIDS. Circulating Tat also acts as a chemokine-like and/or growth factor-like molecule that binds to specific receptors on the surface of the cells, affecting many cellular pathways. In the vascular system, Tat binds to ITGAV/ITGB3 and ITGA5/ITGB1 integrins dimers at the surface of endothelial cells and competes with bFGF for heparin-binding sites, leading to an excess of soluble bFGF. The sequence is that of Protein Tat from Homo sapiens (Human).